The primary structure comprises 739 residues: Phosphoribosylformylglycinamidine synthase subunit PurL (739 aa).

Histidine 54 is an active-site residue. Positions 57 and 96 each coordinate ATP. Glutamate 98 serves as a coordination point for Mg(2+). Substrate contacts are provided by residues 99–102 and arginine 121; that span reads SHNH. The active-site Proton acceptor is the histidine 100. Aspartate 122 is a binding site for Mg(2+). A substrate-binding site is contributed by glutamine 245. Aspartate 273 contacts Mg(2+). 317-319 serves as a coordination point for substrate; it reads ESQ. ATP-binding residues include aspartate 500 and glycine 537. Asparagine 538 provides a ligand contact to Mg(2+). Substrate is bound at residue serine 540.

The protein belongs to the FGAMS family. Monomer. Part of the FGAM synthase complex composed of 1 PurL, 1 PurQ and 2 PurS subunits.

The protein resides in the cytoplasm. It catalyses the reaction N(2)-formyl-N(1)-(5-phospho-beta-D-ribosyl)glycinamide + L-glutamine + ATP + H2O = 2-formamido-N(1)-(5-O-phospho-beta-D-ribosyl)acetamidine + L-glutamate + ADP + phosphate + H(+). It participates in purine metabolism; IMP biosynthesis via de novo pathway; 5-amino-1-(5-phospho-D-ribosyl)imidazole from N(2)-formyl-N(1)-(5-phospho-D-ribosyl)glycinamide: step 1/2. Its function is as follows. Part of the phosphoribosylformylglycinamidine synthase complex involved in the purines biosynthetic pathway. Catalyzes the ATP-dependent conversion of formylglycinamide ribonucleotide (FGAR) and glutamine to yield formylglycinamidine ribonucleotide (FGAM) and glutamate. The FGAM synthase complex is composed of three subunits. PurQ produces an ammonia molecule by converting glutamine to glutamate. PurL transfers the ammonia molecule to FGAR to form FGAM in an ATP-dependent manner. PurS interacts with PurQ and PurL and is thought to assist in the transfer of the ammonia molecule from PurQ to PurL. The protein is Phosphoribosylformylglycinamidine synthase subunit PurL of Bacillus anthracis (strain A0248).